The chain runs to 869 residues: DNA mismatch repair protein MutS (869 aa).

602 to 609 contacts ATP; sequence GPNMSGKS.

This sequence belongs to the DNA mismatch repair MutS family.

Its function is as follows. This protein is involved in the repair of mismatches in DNA. It is possible that it carries out the mismatch recognition step. This protein has a weak ATPase activity. This chain is DNA mismatch repair protein MutS, found in Bacillus licheniformis (strain ATCC 14580 / DSM 13 / JCM 2505 / CCUG 7422 / NBRC 12200 / NCIMB 9375 / NCTC 10341 / NRRL NRS-1264 / Gibson 46).